Reading from the N-terminus, the 84-residue chain is Putative movement protein (84 aa).

Residues 15-35 traverse the membrane as a helical segment; that stretch reads ALHGILVAFIAVLCLIGCLWA.

Interacts with the capsid protein (CP). Part of a MP-CP-viral DNA complex.

Its subcellular location is the host membrane. Functionally, involved in the viral transport within, and between cells. The protein is Putative movement protein of Miscanthus streak virus (isolate 91) (MiSV).